A 65-amino-acid chain; its full sequence is UPF0434 protein CPS_2127 (65 aa).

Belongs to the UPF0434 family.

The sequence is that of UPF0434 protein CPS_2127 from Colwellia psychrerythraea (strain 34H / ATCC BAA-681) (Vibrio psychroerythus).